The sequence spans 409 residues: Probable tRNA pseudouridine synthase D (409 aa).

The active-site Nucleophile is Asp-73. The TRUD domain maps to 146–365 (GFPNFFGDQR…SSGDRRIISA (220 aa)).

The protein belongs to the pseudouridine synthase TruD family.

It catalyses the reaction uridine(13) in tRNA = pseudouridine(13) in tRNA. Could be responsible for synthesis of pseudouridine from uracil-13 in transfer RNAs. In Thermoplasma volcanium (strain ATCC 51530 / DSM 4299 / JCM 9571 / NBRC 15438 / GSS1), this protein is Probable tRNA pseudouridine synthase D.